A 261-amino-acid polypeptide reads, in one-letter code: 3-methyl-2-oxobutanoate hydroxymethyltransferase (261 aa).

Asp42 and Asp81 together coordinate Mg(2+). 3-methyl-2-oxobutanoate is bound by residues 42 to 43 (DS), Asp81, and Lys110. Residue Glu112 coordinates Mg(2+). Glu179 functions as the Proton acceptor in the catalytic mechanism.

This sequence belongs to the PanB family. In terms of assembly, homodecamer; pentamer of dimers. Mg(2+) is required as a cofactor.

Its subcellular location is the cytoplasm. The enzyme catalyses 3-methyl-2-oxobutanoate + (6R)-5,10-methylene-5,6,7,8-tetrahydrofolate + H2O = 2-dehydropantoate + (6S)-5,6,7,8-tetrahydrofolate. Its pathway is cofactor biosynthesis; (R)-pantothenate biosynthesis; (R)-pantoate from 3-methyl-2-oxobutanoate: step 1/2. Functionally, catalyzes the reversible reaction in which hydroxymethyl group from 5,10-methylenetetrahydrofolate is transferred onto alpha-ketoisovalerate to form ketopantoate. The protein is 3-methyl-2-oxobutanoate hydroxymethyltransferase of Thermus thermophilus (strain ATCC 27634 / DSM 579 / HB8).